Reading from the N-terminus, the 428-residue chain is Protein CANDIDATE G-PROTEIN COUPLED RECEPTOR 6 (428 aa).

Positions 1 to 22 (MTILPFLAAVFVLQLLSTLTVA) are cleaved as a signal peptide. N31, N89, and N157 each carry an N-linked (GlcNAc...) asparagine glycan. 7 helical membrane-spanning segments follow: residues 173–193 (LYLVFFLCYLSFLCFWLCFCW), 202–222 (IHLLMTALLLVKSLTLICAAV), 238–258 (IVFYIFQFISVVLLFMVIVLI), 276–296 (LLVIVVPLQVLANIASIVIGE), 310–330 (IFFLADITCCCAIVFAMVWSM), 356–376 (FYVLVIGYLFFTRIVVVVMKM), and 385–405 (VSNAAEEIATLSFYCLMFYMF).

Belongs to the LU7TM family.

The protein localises to the membrane. G-protein coupled receptor. Plays a role in plants and microbes interactions. The chain is Protein CANDIDATE G-PROTEIN COUPLED RECEPTOR 6 from Arabidopsis thaliana (Mouse-ear cress).